The primary structure comprises 213 residues: Probable septum site-determining protein MinC (213 aa).

Belongs to the MinC family. Interacts with MinD and FtsZ.

Cell division inhibitor that blocks the formation of polar Z ring septums. Rapidly oscillates between the poles of the cell to destabilize FtsZ filaments that have formed before they mature into polar Z rings. Prevents FtsZ polymerization. The protein is Probable septum site-determining protein MinC of Clostridium botulinum (strain Eklund 17B / Type B).